We begin with the raw amino-acid sequence, 622 residues long: Modification methylase LlaI (622 aa).

This sequence belongs to the N(4)/N(6)-methyltransferase family.

The enzyme catalyses a 2'-deoxyadenosine in DNA + S-adenosyl-L-methionine = an N(6)-methyl-2'-deoxyadenosine in DNA + S-adenosyl-L-homocysteine + H(+). Its function is as follows. An alpha subtype methylase that modifies unknown specific adenine residues, and protects the DNA from cleavage by the LlaI endonuclease. The protein is Modification methylase LlaI of Lactococcus lactis subsp. lactis (Streptococcus lactis).